A 423-amino-acid polypeptide reads, in one-letter code: D-tagatose-1,6-bisphosphate aldolase subunit GatZ (423 aa).

Belongs to the GatZ/KbaZ family. GatZ subfamily. Forms a complex with GatY.

It participates in carbohydrate metabolism; D-tagatose 6-phosphate degradation; D-glyceraldehyde 3-phosphate and glycerone phosphate from D-tagatose 6-phosphate: step 2/2. Functionally, component of the tagatose-1,6-bisphosphate aldolase GatYZ that is required for full activity and stability of the Y subunit. Could have a chaperone-like function for the proper and stable folding of GatY. When expressed alone, GatZ does not show any aldolase activity. Is involved in the catabolism of galactitol. The protein is D-tagatose-1,6-bisphosphate aldolase subunit GatZ of Salmonella typhimurium (strain LT2 / SGSC1412 / ATCC 700720).